A 122-amino-acid chain; its full sequence is Large ribosomal subunit protein bL12 (122 aa).

The protein belongs to the bacterial ribosomal protein bL12 family. As to quaternary structure, homodimer. Part of the ribosomal stalk of the 50S ribosomal subunit. Forms a multimeric L10(L12)X complex, where L10 forms an elongated spine to which 2 to 4 L12 dimers bind in a sequential fashion. Binds GTP-bound translation factors.

In terms of biological role, forms part of the ribosomal stalk which helps the ribosome interact with GTP-bound translation factors. Is thus essential for accurate translation. This Vibrio parahaemolyticus serotype O3:K6 (strain RIMD 2210633) protein is Large ribosomal subunit protein bL12.